The chain runs to 104 residues: MTYAIVETGGKQYRVQEGDTLRVEKLTAGEGETVVFDKVLAISRDGKVTVGTPYIEGAKVTAKVAAHGKGPKIIVFKYRNKTNYRRKTGHRQPFTAITIESIEG.

The protein belongs to the bacterial ribosomal protein bL21 family. In terms of assembly, part of the 50S ribosomal subunit. Contacts protein L20.

Functionally, this protein binds to 23S rRNA in the presence of protein L20. The protein is Large ribosomal subunit protein bL21 of Symbiobacterium thermophilum (strain DSM 24528 / JCM 14929 / IAM 14863 / T).